A 582-amino-acid chain; its full sequence is MKVHIQQLLEQAIVCLIKQEIIPADIQPRINIDRTKDKSHGDYANNLALMLAKPAKQNPRHLAELIIANIPESTLVIKMEIAGPGFINFFINPNFLEKQIDGAYLDKRLNVQIEANPQTIVIDYSSPNLAKEMHVGHLRSSIIGDAVARTLEFKGNNVVRQNHVGDWGTQFGMLLAYMEELRAKGEPIENNLANLEIFYRAAKGRFDESEDFATRARHLVVKLQGGNKDCLKLWAKFNETSLSHCQETYQRLGVSLTRADVRGESSYNDQLAVVVEDLDKQGLLQQSQGAKCVFLDNFKNKEGDPLPVIIQKKDGGFLYATSDLAAMRYRQNELNADRILYFVDARQGLHFQQVFEVARSAGFVNEKTSLEHMPFGTVMGEDGRPFKTRSGAVAKLADLLTEAEVRAYELVKEKNKEMSEPELRHIASVVGISSVKYADLSKNRTSDYTFSFDSMLSFEGNTAPYLLYAYTRVVSIFNKAGIEMGSVTAAVSLTQEKEIDLANKLIQFNDIIDQVAKQGMPHFLCSYLFELAGLFSSFYEACPILIAETETQKQSRLKLAGLTAKTLKQGLSLLGINTLERM.

The 'HIGH' region motif lies at 127–137; the sequence is PNLAKEMHVGH.

It belongs to the class-I aminoacyl-tRNA synthetase family. In terms of assembly, monomer.

Its subcellular location is the cytoplasm. It carries out the reaction tRNA(Arg) + L-arginine + ATP = L-arginyl-tRNA(Arg) + AMP + diphosphate. This Psychromonas ingrahamii (strain DSM 17664 / CCUG 51855 / 37) protein is Arginine--tRNA ligase.